A 364-amino-acid polypeptide reads, in one-letter code: tRNA 2-selenouridine synthase (364 aa).

Positions 14-136 constitute a Rhodanese domain; the sequence is VLNNTPLIDV…AFRNWLMQET (123 aa). Cysteine 97 acts as the S-selanylcysteine intermediate in catalysis.

The protein belongs to the SelU family. Monomer.

The catalysed reaction is 5-methylaminomethyl-2-thiouridine(34) in tRNA + selenophosphate + (2E)-geranyl diphosphate + H2O + H(+) = 5-methylaminomethyl-2-selenouridine(34) in tRNA + (2E)-thiogeraniol + phosphate + diphosphate. The enzyme catalyses 5-methylaminomethyl-2-thiouridine(34) in tRNA + (2E)-geranyl diphosphate = 5-methylaminomethyl-S-(2E)-geranyl-thiouridine(34) in tRNA + diphosphate. It catalyses the reaction 5-methylaminomethyl-S-(2E)-geranyl-thiouridine(34) in tRNA + selenophosphate + H(+) = 5-methylaminomethyl-2-(Se-phospho)selenouridine(34) in tRNA + (2E)-thiogeraniol. It carries out the reaction 5-methylaminomethyl-2-(Se-phospho)selenouridine(34) in tRNA + H2O = 5-methylaminomethyl-2-selenouridine(34) in tRNA + phosphate. Functionally, involved in the post-transcriptional modification of the uridine at the wobble position (U34) of tRNA(Lys), tRNA(Glu) and tRNA(Gln). Catalyzes the conversion of 2-thiouridine (S2U-RNA) to 2-selenouridine (Se2U-RNA). Acts in a two-step process involving geranylation of 2-thiouridine (S2U) to S-geranyl-2-thiouridine (geS2U) and subsequent selenation of the latter derivative to 2-selenouridine (Se2U) in the tRNA chain. The protein is tRNA 2-selenouridine synthase of Sulfurovum sp. (strain NBC37-1).